The following is a 392-amino-acid chain: MTQNTEPQSPAHTRVIVGMSGGVDSSVAAWLLKDQGYQVEGLFMKNWDEDDGTEYCTAMTDLADAQAVADAIGIKLHTASFAAEYWDRVFEHFLSEYSAGRTPNPDILCNKEVKFRAFLDYAVTLGADYIATGHYTRQRPLNDGSGKAQLLKGLDPNKDQSYFLHAVSGERIARTLFPVGELEKPEVRRIAEEQGFVTHDKKDSTGICFIGERKFTDFLKQYLPAQPGNIETPDGTVIGKHQGLMYHTIGQRQGLGIGGLAEFGDEPWYVAEKDLKRNVLIAVQGKHHPLLFSRGLVSGPVDWVAGEPPAQKFRCKAKTRYRQPDQDCEVTVIDGGVKVVFDDAQRAVTPGQSVVFYQGEVCLGGGVIEQTWRDNEALPARLEHQASEGSDT.

ATP is bound by residues 18–25 (GMSGGVDS) and Met44. The tract at residues 104–106 (NPD) is interaction with target base in tRNA. Cys109 acts as the Nucleophile in catalysis. Residues Cys109 and Cys208 are joined by a disulfide bond. Gly133 provides a ligand contact to ATP. The interaction with tRNA stretch occupies residues 158 to 160 (KDQ). The active-site Cysteine persulfide intermediate is the Cys208. The interaction with tRNA stretch occupies residues 320-321 (RY).

The protein belongs to the MnmA/TRMU family.

The protein localises to the cytoplasm. The catalysed reaction is S-sulfanyl-L-cysteinyl-[protein] + uridine(34) in tRNA + AH2 + ATP = 2-thiouridine(34) in tRNA + L-cysteinyl-[protein] + A + AMP + diphosphate + H(+). Catalyzes the 2-thiolation of uridine at the wobble position (U34) of tRNA, leading to the formation of s(2)U34. This is tRNA-specific 2-thiouridylase MnmA from Marinobacter nauticus (strain ATCC 700491 / DSM 11845 / VT8) (Marinobacter aquaeolei).